Here is a 459-residue protein sequence, read N- to C-terminus: tRNA modification GTPase MnmE (459 aa).

Positions 21, 84, and 123 each coordinate (6S)-5-formyl-5,6,7,8-tetrahydrofolate. The 162-residue stretch at 219 to 380 (GMLTVIVGQP…LEKEIKQRVY (162 aa)) folds into the TrmE-type G domain. A K(+)-binding site is contributed by N229. GTP is bound by residues 229-234 (NVGKSS), 248-254 (TDIPGTT), and 273-276 (DTAG). S233 provides a ligand contact to Mg(2+). The K(+) site is built by T248, I250, and T253. T254 contacts Mg(2+). K459 lines the (6S)-5-formyl-5,6,7,8-tetrahydrofolate pocket.

The protein belongs to the TRAFAC class TrmE-Era-EngA-EngB-Septin-like GTPase superfamily. TrmE GTPase family. In terms of assembly, homodimer. Heterotetramer of two MnmE and two MnmG subunits. K(+) is required as a cofactor.

Its subcellular location is the cytoplasm. Exhibits a very high intrinsic GTPase hydrolysis rate. Involved in the addition of a carboxymethylaminomethyl (cmnm) group at the wobble position (U34) of certain tRNAs, forming tRNA-cmnm(5)s(2)U34. The protein is tRNA modification GTPase MnmE of Desulfitobacterium hafniense (strain Y51).